A 282-amino-acid polypeptide reads, in one-letter code: MSKTVRIPDMFLKASAASKRKSASNTENIPEKVPAGNENQEVKKMKLQAPEPTEILLKSLLTGESWSKLLEEEFKKGYISKIEKFLNSEVNKGKQVFPPPTQIFTTFNLLPFDEISVVIIGQDPYHDDNQAHGLSFSVQKGVKPPPSLKNIYKELESDIEGFKRPDHGNLLGWTRQGVFMLNATLTVRAHEANSHAKIGWQTFTDTVIRIISRQSEKPIVFLLWGGFAHKKEELIDTKKHVVIKTAHPSPLSARKWWGCKCFSKCNTELENSGRNPINWADL.

Positions S15–Q40 are disordered. D123 functions as the Proton acceptor in the catalytic mechanism.

It belongs to the uracil-DNA glycosylase (UDG) superfamily. UNG family.

The protein resides in the mitochondrion. It is found in the nucleus. The catalysed reaction is Hydrolyzes single-stranded DNA or mismatched double-stranded DNA and polynucleotides, releasing free uracil.. Inhibited by UGI, a B.subtilis bacteriophage PBS2 peptide inhibitor. In terms of biological role, excises uracil residues from the DNA which can arise as a result of misincorporation of dUMP residues by DNA polymerase or due to deamination of cytosine. This Caenorhabditis elegans protein is Uracil-DNA glycosylase.